The chain runs to 663 residues: Guanine nucleotide exchange factor subunit RGP1 (663 aa).

Residues Ser351, Ser354, Ser357, Ser363, Ser364, and Ser370 each carry the phosphoserine modification. The segment at 412–443 (GKDEDSSDPEPNDSHFSNEMVTSAESSLRSDA) is disordered. The span at 426 to 440 (HFSNEMVTSAESSLR) shows a compositional bias: polar residues.

Belongs to the RGP1 family. Forms a complex with RIC1.

The protein localises to the golgi apparatus. In terms of biological role, the RIC1-RGP1 complex acts as a guanine nucleotide exchange factor (GEF), which activates YPT6 by exchanging bound GDP for free GTP. It is thereby required for efficient fusion of endosome-derived vesicles with the Golgi. The RIC1-RGP1 participates in the recycling of SNC1, presumably by mediating fusion of endosomal vesicles with the Golgi compartment. Its function is as follows. Required for proper mitotic growth. The protein is Guanine nucleotide exchange factor subunit RGP1 of Saccharomyces cerevisiae (strain ATCC 204508 / S288c) (Baker's yeast).